An 883-amino-acid polypeptide reads, in one-letter code: N,N'-diacetylchitobiase (883 aa).

A signal peptide spans 1–17 (MLKHSLIAASVITTLAG). The N-palmitoyl cysteine moiety is linked to residue cysteine 18. Cysteine 18 is lipidated: S-diacylglycerol cysteine. 3 cysteine pairs are disulfide-bonded: cysteine 54-cysteine 64, cysteine 394-cysteine 402, and cysteine 502-cysteine 577. The Proton donor role is filled by glutamate 537.

Belongs to the glycosyl hydrolase 20 family. This protein is probably a lipoprotein, its processing is inhibited by globomycin.

Its subcellular location is the cell outer membrane. It catalyses the reaction Hydrolysis of terminal non-reducing N-acetyl-D-hexosamine residues in N-acetyl-beta-D-hexosaminides.. Its pathway is glycan degradation; chitin degradation. Hydrolysis of terminal, non-reducing N-acetyl-beta-D-glucosamine residues in chitobiose and higher analogs, and in glycoproteins. In Vibrio harveyi (Beneckea harveyi), this protein is N,N'-diacetylchitobiase (chb).